The sequence spans 350 residues: F(420)H(2) dehydrogenase subunit H (350 aa).

The next 8 membrane-spanning stretches (helical) occupy residues Gly-21–Ile-41, Val-94–Ile-114, Ile-128–Ala-148, Pro-173–Ile-193, Phe-200–Ala-220, Ile-261–Val-281, Gly-288–Ile-308, and Leu-330–Ala-350.

This sequence belongs to the complex I subunit 1 family. The FPO complex is composed of at least 13 different subunits. FpoA, FpoH, FpoJ, FpoK, FpoL, FpoM and FpoN proteins constitute the membrane sector of the complex.

The protein localises to the cell membrane. The catalysed reaction is methanophenazine + reduced coenzyme F420-(gamma-L-Glu)(n) = dihydromethanophenazine + oxidized coenzyme F420-(gamma-L-Glu)(n) + H(+). In terms of biological role, component of the F(420)H(2) dehydrogenase (FPO complex) which is part of the energy-conserving F(420)H(2):heterodisulfide oxidoreductase system. The membrane-bound electron transfer system of the complex plays an important role in the metabolism of methylotrophic methanogens when the organisms grow on methanol or methylamines. Catalyzes the oxidation of methanophenazine to dihydromethanophenazine. It shuttles electrons from F(420)H(2), via FAD and iron-sulfur (Fe-S) centers, to methanophenazine (an electron carrier in the membrane). It couples the redox reaction to proton translocation (for every two electrons transferred, two hydrogen ions are translocated across the cytoplasmic membrane), and thus conserves the redox energy in a proton gradient. It also catalyzes the oxidation of F(420)H(2) with quinones such as 2,3-dimethyl-1,4-naphthoquinone, 2-methyl-1,4-naphthoquinone and tetramethyl-p-benzoquinone. This chain is F(420)H(2) dehydrogenase subunit H, found in Methanosarcina mazei (strain ATCC BAA-159 / DSM 3647 / Goe1 / Go1 / JCM 11833 / OCM 88) (Methanosarcina frisia).